A 282-amino-acid polypeptide reads, in one-letter code: Bifunctional protein FolD (282 aa).

NADP(+) contacts are provided by residues 166-168 and S191; that span reads GRS.

This sequence belongs to the tetrahydrofolate dehydrogenase/cyclohydrolase family. In terms of assembly, homodimer.

The enzyme catalyses (6R)-5,10-methylene-5,6,7,8-tetrahydrofolate + NADP(+) = (6R)-5,10-methenyltetrahydrofolate + NADPH. It carries out the reaction (6R)-5,10-methenyltetrahydrofolate + H2O = (6R)-10-formyltetrahydrofolate + H(+). It functions in the pathway one-carbon metabolism; tetrahydrofolate interconversion. Its function is as follows. Catalyzes the oxidation of 5,10-methylenetetrahydrofolate to 5,10-methenyltetrahydrofolate and then the hydrolysis of 5,10-methenyltetrahydrofolate to 10-formyltetrahydrofolate. The sequence is that of Bifunctional protein FolD from Acidovorax sp. (strain JS42).